Reading from the N-terminus, the 371-residue chain is UDP-N-acetylglucosamine--N-acetylmuramyl-(pentapeptide) pyrophosphoryl-undecaprenol N-acetylglucosamine transferase (371 aa).

UDP-N-acetyl-alpha-D-glucosamine-binding positions include 15–17 (TGG), asparagine 126, arginine 172, serine 199, isoleucine 256, 275–280 (ALTVSE), and glutamine 301.

The protein belongs to the glycosyltransferase 28 family. MurG subfamily.

The protein localises to the cell inner membrane. It carries out the reaction di-trans,octa-cis-undecaprenyl diphospho-N-acetyl-alpha-D-muramoyl-L-alanyl-D-glutamyl-meso-2,6-diaminopimeloyl-D-alanyl-D-alanine + UDP-N-acetyl-alpha-D-glucosamine = di-trans,octa-cis-undecaprenyl diphospho-[N-acetyl-alpha-D-glucosaminyl-(1-&gt;4)]-N-acetyl-alpha-D-muramoyl-L-alanyl-D-glutamyl-meso-2,6-diaminopimeloyl-D-alanyl-D-alanine + UDP + H(+). It participates in cell wall biogenesis; peptidoglycan biosynthesis. In terms of biological role, cell wall formation. Catalyzes the transfer of a GlcNAc subunit on undecaprenyl-pyrophosphoryl-MurNAc-pentapeptide (lipid intermediate I) to form undecaprenyl-pyrophosphoryl-MurNAc-(pentapeptide)GlcNAc (lipid intermediate II). The polypeptide is UDP-N-acetylglucosamine--N-acetylmuramyl-(pentapeptide) pyrophosphoryl-undecaprenol N-acetylglucosamine transferase (Francisella tularensis subsp. mediasiatica (strain FSC147)).